We begin with the raw amino-acid sequence, 196 residues long: Imidazole glycerol phosphate synthase subunit HisH (196 aa).

One can recognise a Glutamine amidotransferase type-1 domain in the interval 2 to 196 (NVVILDTGCA…AQLLKNFLEM (195 aa)). Cys77 (nucleophile) is an active-site residue. Residues His178 and Glu180 contribute to the active site.

Heterodimer of HisH and HisF.

It is found in the cytoplasm. It carries out the reaction 5-[(5-phospho-1-deoxy-D-ribulos-1-ylimino)methylamino]-1-(5-phospho-beta-D-ribosyl)imidazole-4-carboxamide + L-glutamine = D-erythro-1-(imidazol-4-yl)glycerol 3-phosphate + 5-amino-1-(5-phospho-beta-D-ribosyl)imidazole-4-carboxamide + L-glutamate + H(+). It catalyses the reaction L-glutamine + H2O = L-glutamate + NH4(+). It participates in amino-acid biosynthesis; L-histidine biosynthesis; L-histidine from 5-phospho-alpha-D-ribose 1-diphosphate: step 5/9. Its function is as follows. IGPS catalyzes the conversion of PRFAR and glutamine to IGP, AICAR and glutamate. The HisH subunit catalyzes the hydrolysis of glutamine to glutamate and ammonia as part of the synthesis of IGP and AICAR. The resulting ammonia molecule is channeled to the active site of HisF. The protein is Imidazole glycerol phosphate synthase subunit HisH of Salmonella choleraesuis (strain SC-B67).